The sequence spans 666 residues: Amyloid beta A4 precursor protein-binding family B member 1-interacting protein (666 aa).

Ser-55 carries the phosphoserine modification. The tract at residues 122–155 (SQYEDDLPPPPADPVLDLPLPPPPPEPLSQEEEE) is disordered. Residues 129–148 (PPPPADPVLDLPLPPPPPEP) show a composition bias toward pro residues. The region spanning 176–263 (KKLVVKVHMN…KILFLEKEEK (88 aa)) is the Ras-associating domain. Residues 310 to 419 (VPELEGALYL…WVMGIRIAKY (110 aa)) form the PH domain. A disordered region spans residues 448-666 (AAAPAQPSTG…ALQKKRGNVS (219 aa)). Polar residues predominate over residues 453–478 (QPSTGPKTGTTQPNGQIPQATHSVSA). Positions 483–504 (AQRHAETSKDKKPALGNHHDPA) are enriched in basic and acidic residues. Phosphoserine is present on Ser-526. Thr-528 carries the phosphothreonine modification. Ser-531 carries the phosphoserine modification. 2 stretches are compositionally biased toward pro residues: residues 547 to 589 (PAPP…PPPS) and 598 to 631 (LPPPPPPPPAPAPAPVPDSARPPPAVAKRPPVPP).

This sequence belongs to the MRL family. Interacts, through the N-terminal Pro-rich region, with the WW domain of APBB1. Interacts with RAP1A, PFN1, TLN1, VASP, VCL and ENAH. As to expression, widely expressed with high expression in thymus, spleen, lymph node, bone marrow and peripheral leukocytes.

It localises to the cell membrane. The protein localises to the cell projection. Its subcellular location is the lamellipodium. It is found in the cell junction. The protein resides in the focal adhesion. It localises to the cytoplasm. The protein localises to the cytoskeleton. In terms of biological role, appears to function in the signal transduction from Ras activation to actin cytoskeletal remodeling. Suppresses insulin-induced promoter activities through AP1 and SRE. Mediates Rap1-induced adhesion. The polypeptide is Amyloid beta A4 precursor protein-binding family B member 1-interacting protein (APBB1IP) (Homo sapiens (Human)).